A 148-amino-acid chain; its full sequence is Large ribosomal subunit protein uL15 (148 aa).

Residues 1–61 form a disordered region; sequence MKINDLKPAP…GGQMPLQRRV (61 aa).

This sequence belongs to the universal ribosomal protein uL15 family. In terms of assembly, part of the 50S ribosomal subunit.

Functionally, binds to the 23S rRNA. In Thermodesulfovibrio yellowstonii (strain ATCC 51303 / DSM 11347 / YP87), this protein is Large ribosomal subunit protein uL15.